The following is a 204-amino-acid chain: Lymphotoxin-alpha (204 aa).

The first 33 residues, 1–33, serve as a signal peptide directing secretion; it reads MTPPGRLYLRRVCSTPILLLLGLLLALPPEAQG. Positions 62–204 constitute a THD domain; the sequence is PAAHLVGDPS…SSVFFGAFAL (143 aa). N-linked (GlcNAc...) asparagine glycosylation occurs at asparagine 95. An intrachain disulfide couples cysteine 119 to cysteine 155.

It belongs to the tumor necrosis factor family. As to quaternary structure, homotrimer, and heterotrimer of either two LTB and one LTA subunits or (less prevalent) two LTA and one LTB subunits. Interacts with TNFRSF14.

The protein localises to the secreted. It is found in the membrane. Its function is as follows. Cytokine that in its homotrimeric form binds to TNFRSF1A/TNFR1, TNFRSF1B/TNFBR and TNFRSF14/HVEM. In its heterotrimeric form with LTB binds to TNFRSF3/LTBR. Lymphotoxin is produced by lymphocytes and is cytotoxic for a wide range of tumor cells in vitro and in vivo. This chain is Lymphotoxin-alpha (LTA), found in Sus scrofa (Pig).